A 697-amino-acid polypeptide reads, in one-letter code: uncharacterized protein (697 aa).

Residues 516–545 (ADQSQNDVVALSSRIDRLTQEVVALQNSEK) are a coiled coil.

This is an uncharacterized protein from Callospermophilus lateralis (Golden-mantled ground squirrel).